A 450-amino-acid chain; its full sequence is Tubulin alpha chain (450 aa).

Q11 is a binding site for GTP. K40 is modified (N6-acetyllysine). GTP-binding residues include E71, S140, G144, T145, T179, N206, and N228. A Mg(2+)-binding site is contributed by E71. E254 is a catalytic residue.

It belongs to the tubulin family. As to quaternary structure, dimer of alpha and beta chains. A typical microtubule is a hollow water-filled tube with an outer diameter of 25 nm and an inner diameter of 15 nM. Alpha-beta heterodimers associate head-to-tail to form protofilaments running lengthwise along the microtubule wall with the beta-tubulin subunit facing the microtubule plus end conferring a structural polarity. Microtubules usually have 13 protofilaments but different protofilament numbers can be found in some organisms and specialized cells. Mg(2+) is required as a cofactor. Post-translationally, acetylation of alpha chains at Lys-40 stabilizes microtubules and affects affinity and processivity of microtubule motors. This modification has a role in multiple cellular functions, ranging from cell motility, cell cycle progression or cell differentiation to intracellular trafficking and signaling.

The protein localises to the cytoplasm. It is found in the cytoskeleton. The catalysed reaction is GTP + H2O = GDP + phosphate + H(+). Tubulin is the major constituent of microtubules, a cylinder consisting of laterally associated linear protofilaments composed of alpha- and beta-tubulin heterodimers. Microtubules grow by the addition of GTP-tubulin dimers to the microtubule end, where a stabilizing cap forms. Below the cap, tubulin dimers are in GDP-bound state, owing to GTPase activity of alpha-tubulin. In Euplotes vannus (Marine ciliate), this protein is Tubulin alpha chain.